We begin with the raw amino-acid sequence, 244 residues long: Small ribosomal subunit protein uS3 (244 aa).

Residues 39–107 (MRKFVMSELK…ETHLNIVEVR (69 aa)) form the KH type-2 domain. A disordered region spans residues 214-244 (ASERRALEGDAQGPASRERDRGDRRRERDNA). A compositionally biased stretch (basic and acidic residues) spans 229–244 (SRERDRGDRRRERDNA).

The protein belongs to the universal ribosomal protein uS3 family. As to quaternary structure, part of the 30S ribosomal subunit. Forms a tight complex with proteins S10 and S14.

In terms of biological role, binds the lower part of the 30S subunit head. Binds mRNA in the 70S ribosome, positioning it for translation. The chain is Small ribosomal subunit protein uS3 from Rhizobium etli (strain CIAT 652).